Reading from the N-terminus, the 236-residue chain is Peptidase E (236 aa).

Active-site charge relay system residues include S122, D137, and H159.

The protein belongs to the peptidase S51 family.

The protein resides in the cytoplasm. The enzyme catalyses Dipeptidase E catalyzes the hydrolysis of dipeptides Asp-|-Xaa. It does not act on peptides with N-terminal Glu, Asn or Gln, nor does it cleave isoaspartyl peptides.. Hydrolyzes dipeptides containing N-terminal aspartate residues. May play a role in allowing the cell to use peptide aspartate to spare carbon otherwise required for the synthesis of the aspartate family of amino acids. The chain is Peptidase E from Shewanella sp. (strain ANA-3).